A 91-amino-acid chain; its full sequence is Small ribosomal subunit protein uS19 (91 aa).

The protein belongs to the universal ribosomal protein uS19 family.

Protein S19 forms a complex with S13 that binds strongly to the 16S ribosomal RNA. The chain is Small ribosomal subunit protein uS19 from Desulfotalea psychrophila (strain LSv54 / DSM 12343).